We begin with the raw amino-acid sequence, 164 residues long: CB1 cannabinoid receptor-interacting protein 1 (164 aa).

Belongs to the CNRIP family. As to quaternary structure, interacts with the cannabinoid receptor CNR1 (via C-terminus). Does not interact with cannabinoid receptor CNR2.

Its function is as follows. Suppresses cannabinoid receptor CNR1-mediated tonic inhibition of voltage-gated calcium channels. This Rattus norvegicus (Rat) protein is CB1 cannabinoid receptor-interacting protein 1 (Cnrip1).